The following is a 706-amino-acid chain: MTTTSKNCLTLTSIAAAVAAVLVLSACGGGSAGENINRKPTYLGTVVSVNYDGASDDLLTAGLGKTGLGATAPVAADPLNPTAAELRRIAIFNNYRALLDISVAGGYGSLYGPNVDASGVITTSEGKIAGTEYMAYSDDGTGNQNITMLVQVPTTFNPASPCIVTGTSSGSRGVYGAIGTSGEWGLKNGCAVAYTDKGTGTGIHDLQNDTVNLQRGERATATAAGKASNFTASLTSTERAAFNTATPNRFAVKHAHSQQNTEKDWGKWTLQAVEFAYFVLNENYGDAAKDGVSRLVKLKPANTIVIASSASNGAGAALAAAELDTKGLITGVAVAEPQIQVVPDTRLSVRRGASTLGGTGRSLFDYASLGNLLQPCAALASPTTNVFNTVNTTIATNRCNALQASGLIVGNTTAELAADAMARLLAAGHQPESSVLQASHYSFATPAVAVTFANSYGRFSVKDNLCGFSFAATGAAGSATPNAPVAASAAALATSFGASNGIPPTVGINIVNNNSVGGPLLDAASLSAGSVLDYNIAGALCLRELLGGSSANALKVQQGINEVLRTGDLQGKPALIVHGRADAQVPVAFSSRPYFGRNKIVEGANSRLSYIEVTNAQHFDAFLAFPGYGERFVPAHRYFIQAMDMMYANLKTGAALPASQVVRTVPRGLTGAVVNPITPANVPPIKTVPAVADQITFANNVVTVAD.

The first 32 residues, 1 to 32 (MTTTSKNCLTLTSIAAAVAAVLVLSACGGGSA), serve as a signal peptide directing secretion. S311 serves as the catalytic Charge relay system.

Belongs to the D-(-)-3-hydroxybutyrate oligomer hydrolase family.

It localises to the secreted. The enzyme catalyses (3R)-hydroxybutanoate dimer + H2O = 2 (R)-3-hydroxybutanoate + H(+). The protein operates within lipid metabolism; butanoate metabolism. Functionally, participates in the degradation of poly-3-hydroxybutyrate (PHB). It works downstream of poly(3-hydroxybutyrate) depolymerase, hydrolyzing D(-)-3-hydroxybutyrate oligomers of various length (3HB-oligomers) into 3HB-monomers. The chain is D-(-)-3-hydroxybutyrate oligomer hydrolase from Polaromonas sp. (strain JS666 / ATCC BAA-500).